Reading from the N-terminus, the 400-residue chain is Phosphoglycerate kinase (400 aa).

Residues 23 to 25, arginine 38, 61 to 64, arginine 120, and arginine 153 contribute to the substrate site; these read DLN and HFGR. ATP is bound by residues lysine 203, glutamate 325, and 355–358; that span reads GGDT.

This sequence belongs to the phosphoglycerate kinase family. As to quaternary structure, monomer.

It localises to the cytoplasm. It catalyses the reaction (2R)-3-phosphoglycerate + ATP = (2R)-3-phospho-glyceroyl phosphate + ADP. The protein operates within carbohydrate degradation; glycolysis; pyruvate from D-glyceraldehyde 3-phosphate: step 2/5. In Methylorubrum extorquens (strain PA1) (Methylobacterium extorquens), this protein is Phosphoglycerate kinase.